The sequence spans 1007 residues: MDPSRYGRQQEWDNNSAPEGYGTQHDPNHRFGVSYDDGYPDERLMRDDVYNYPPGHNTLGDLPQSRKRNYEENYPSELRRQEKPYIDSNYAADYYHDSEAGSRNGHYRDHEHERSSRYDGCDDYSCNDNNYRSKNYHHSRDDGREKDYDYTRRSYDSEYERASVRDGSRKSRDPQDRERNSRDREWDSRDREWDKRCYSRERDESPHKRYEKSRSRSTGRGEFSRSRSPRGRSHGRSYREDSYEGDHWNESERRREYEDRHNQDHFSATPSATVVVKGLSMKSTEEDLYQILAEWGPLHHVRVIREQNSGISRGFAFIDFPTVDAARTMMDRIEHDGIVLDGRKLMFHYSQPTGRAGVSRRQEHASRRSYGGSRNMIVPTDWICTICGCINFARRTSCFQCNEPKTKDSPSADVGLSNSAAGKRISETGPTHVLVVRGLDEDADEEMLRYEFSKHAPIKDLRLVRDKFTHVSRGFAFVHFYSVEDATKALEATNRTALERNGKILRVAYAKSVHGSGTGISAPSHSNNLAAAAIEAATFSQQYDGVGWAPKEYNTGEKQNTGGQAQGVGEIESQKGTSAPQSGYVWDEASGYYYDAASGYYYDGNSGLYYDSNSGLWYSYDQQTQQYVPCPDQNNESKVTENQPDSAKKEKSSQQKVIISAATTPNVEKVLSLPDAVQAAAAAAIASEKREKERVKEIKLASKTSLLASKKKMSNVLTMWKQRSHETQIQRPSPSLGDNPPTVSAEARSSFSTGQSMGKLKSDVIIAKERSTSNHGVSALTTAESSSSSTTGGTLMGVMRGSFGGTLGGASSSASVQMPPILPSASPASVSVSGSGRRRFSETPTAGPTHREQPQTSYRDRAAERRNLYGSSTSSGNDVIDSSEDLMGLRKGSSDPTPFPPGVGGRGITTSTEVSSFDVITEERAIDESNVGNRMLRNMGWHEGSGLGKDGSGMKEPVQAQGVDRRAGLGSQQKKVDAEFEVQPGDTYRTLLHKKALARFRDMSDNN.

Disordered stretches follow at residues 1–185 and 204–269; these read MDPS…RDRE and ESPH…FSAT. Basic and acidic residues-rich tracts occupy residues 40–49, 94–120, 138–185, and 204–214; these read PDERLMRDDV, YYHD…RYDG, HSRD…RDRE, and ESPHKRYEKSR. Over residues 227-236 the composition is skewed to basic residues; that stretch reads RSPRGRSHGR. Residues 237-264 are compositionally biased toward basic and acidic residues; that stretch reads SYREDSYEGDHWNESERRREYEDRHNQD. The 81-residue stretch at 272–352 folds into the RRM 1 domain; sequence ATVVVKGLSM…RKLMFHYSQP (81 aa). The RanBP2-type zinc-finger motif lies at 378–407; it reads VPTDWICTICGCINFARRTSCFQCNEPKTK. The RRM 2 domain occupies 432–512; the sequence is HVLVVRGLDE…KILRVAYAKS (81 aa). 6 disordered regions span residues 556–581, 631–656, 725–755, 771–797, 810–910, and 945–977; these read GEKQ…SAPQ, PDQN…SQQK, HETQ…STGQ, STSN…TLMG, ASSS…GITT, and SGLG…KKVD. Residues 631-645 are compositionally biased toward polar residues; sequence PDQNNESKVTENQPD. 2 stretches are compositionally biased toward low complexity: residues 778-793 and 823-835; these read SALT…TTGG and PSAS…VSGS. The span at 849–867 shows a compositional bias: basic and acidic residues; sequence THREQPQTSYRDRAAERRN. The G-patch domain maps to 928 to 974; the sequence is ESNVGNRMLRNMGWHEGSGLGKDGSGMKEPVQAQGVDRRAGLGSQQK.

In terms of assembly, interacts with the pre-spliceosomal component U2AF65A. Ubiquitous with highest expression in siliques toward the end of seed maturation.

The protein resides in the nucleus. Splicing factor that controls alternative splicing of the developmental regulator ABI3. Reduces splicing of a cryptic intron in ABI3, leading to a decreased in ABI3-beta transcript. Regulates the splicing of the receptor-like kinase SNC4/LRKL-2.6. The chain is SUPPRESSOR OF ABI3-5 from Arabidopsis thaliana (Mouse-ear cress).